An 88-amino-acid chain; its full sequence is Phosphocarrier protein HPr (88 aa).

The HPr domain maps to 1-88; sequence MKKFQAVIKD…KACLEKNKVI (88 aa). The active-site Pros-phosphohistidine intermediate is His-15. Phosphoserine; by HPrK/P is present on Ser-47.

It belongs to the HPr family.

Its subcellular location is the cytoplasm. Its activity is regulated as follows. Phosphorylation on Ser-47 inhibits the phosphoryl transfer from enzyme I to HPr. Functionally, general (non sugar-specific) component of the phosphoenolpyruvate-dependent sugar phosphotransferase system (sugar PTS). This major carbohydrate active-transport system catalyzes the phosphorylation of incoming sugar substrates concomitantly with their translocation across the cell membrane. The phosphoryl group from phosphoenolpyruvate (PEP) is transferred to the phosphoryl carrier protein HPr by enzyme I. Phospho-HPr then transfers it to the PTS EIIA domain. In terms of biological role, P-Ser-HPr interacts with the catabolite control protein A (CcpA), forming a complex that binds to DNA at the catabolite response elements cre, operator sites preceding a large number of catabolite-regulated genes. Thus, P-Ser-HPr is a corepressor in carbon catabolite repression (CCR), a mechanism that allows bacteria to coordinate and optimize the utilization of available carbon sources. P-Ser-HPr also plays a role in inducer exclusion, in which it probably interacts with several non-PTS permeases and inhibits their transport activity. The chain is Phosphocarrier protein HPr (ptsH) from Mycoplasma genitalium (strain ATCC 33530 / DSM 19775 / NCTC 10195 / G37) (Mycoplasmoides genitalium).